The sequence spans 66 residues: Large ribosomal subunit protein bL33 (66 aa).

It belongs to the bacterial ribosomal protein bL33 family.

This chain is Large ribosomal subunit protein bL33, found in Wolbachia sp. subsp. Brugia malayi (strain TRS).